Here is a 201-residue protein sequence, read N- to C-terminus: NADH-quinone oxidoreductase subunit C (201 aa).

It belongs to the complex I 30 kDa subunit family. NDH-1 is composed of 14 different subunits. Subunits NuoB, C, D, E, F, and G constitute the peripheral sector of the complex.

The protein localises to the cell inner membrane. It catalyses the reaction a quinone + NADH + 5 H(+)(in) = a quinol + NAD(+) + 4 H(+)(out). In terms of biological role, NDH-1 shuttles electrons from NADH, via FMN and iron-sulfur (Fe-S) centers, to quinones in the respiratory chain. The immediate electron acceptor for the enzyme in this species is believed to be ubiquinone. Couples the redox reaction to proton translocation (for every two electrons transferred, four hydrogen ions are translocated across the cytoplasmic membrane), and thus conserves the redox energy in a proton gradient. The protein is NADH-quinone oxidoreductase subunit C of Ruegeria sp. (strain TM1040) (Silicibacter sp.).